A 320-amino-acid chain; its full sequence is Cytochrome f (320 aa).

The signal sequence occupies residues 1-35; the sequence is MQTRKTFSWIKEQIARSISVSLLIYIITRTSISSA. Residues Y36, C56, C59, and H60 each coordinate heme. A helical membrane pass occupies residues 286–306; that stretch reads VQGLLFFLASVILAQIFLVLK.

The protein belongs to the cytochrome f family. The 4 large subunits of the cytochrome b6-f complex are cytochrome b6, subunit IV (17 kDa polypeptide, petD), cytochrome f and the Rieske protein, while the 4 small subunits are PetG, PetL, PetM and PetN. The complex functions as a dimer. Requires heme as cofactor.

It is found in the plastid. It localises to the chloroplast thylakoid membrane. Functionally, component of the cytochrome b6-f complex, which mediates electron transfer between photosystem II (PSII) and photosystem I (PSI), cyclic electron flow around PSI, and state transitions. This chain is Cytochrome f, found in Jasminum nudiflorum (Winter jasmine).